A 96-amino-acid polypeptide reads, in one-letter code: ATP synthase subunit c (96 aa).

Helical transmembrane passes span 26-46 (GLVL…CGIG) and 68-88 (IMVT…YALV).

This sequence belongs to the ATPase C chain family. F-type ATPases have 2 components, F(1) - the catalytic core - and F(0) - the membrane proton channel. F(1) has five subunits: alpha(3), beta(3), gamma(1), delta(1), epsilon(1). F(0) has three main subunits: a(1), b(2) and c(10-14). The alpha and beta chains form an alternating ring which encloses part of the gamma chain. F(1) is attached to F(0) by a central stalk formed by the gamma and epsilon chains, while a peripheral stalk is formed by the delta and b chains.

The protein localises to the cell inner membrane. In terms of biological role, f(1)F(0) ATP synthase produces ATP from ADP in the presence of a proton or sodium gradient. F-type ATPases consist of two structural domains, F(1) containing the extramembraneous catalytic core and F(0) containing the membrane proton channel, linked together by a central stalk and a peripheral stalk. During catalysis, ATP synthesis in the catalytic domain of F(1) is coupled via a rotary mechanism of the central stalk subunits to proton translocation. Functionally, key component of the F(0) channel; it plays a direct role in translocation across the membrane. A homomeric c-ring of between 10-14 subunits forms the central stalk rotor element with the F(1) delta and epsilon subunits. The sequence is that of ATP synthase subunit c from Oleidesulfovibrio alaskensis (strain ATCC BAA-1058 / DSM 17464 / G20) (Desulfovibrio alaskensis).